We begin with the raw amino-acid sequence, 409 residues long: Astacin-like metalloendopeptidase (409 aa).

Residues 1 to 19 (MDLKMLLIFTAFLLPAVLG) form the signal peptide. The propeptide occupies 20 to 86 (FPIQDNYENS…EGDIVPRRSR (67 aa)). A compositionally biased stretch (low complexity) spans 30–42 (TATSESTQVTTEE). Residues 30–55 (TATSESTQVTTEESIYDSPSPTETDS) are disordered. Positions 87-285 (SAFNCRNCYW…AKINKLYNCS (199 aa)) constitute a Peptidase M12A domain. Disulfide bonds link Cys91-Cys94, Cys134-Cys284, Cys155-Cys175, Cys287-Cys313, and Cys339-Cys362. His183 contributes to the Zn(2+) binding site. Glu184 is a catalytic residue. Residues His187 and His193 each contribute to the Zn(2+) site. The CUB domain maps to 287–399 (CSTIIDAAFG…SGFQATFTSA (113 aa)).

The cofactor is Zn(2+).

The protein resides in the cytoplasm. Its subcellular location is the cell membrane. It is found in the cytoplasmic vesicle. The protein localises to the secretory vesicle. It localises to the cortical granule. In terms of biological role, probable oocyte-specific oolemmal receptor involved in sperm and egg adhesion and fertilization. Protease which may play a role in the breaking down of the vitelline membrane (days 0-5) and possibly, in the digestion of the egg white (days 9-12). The protein is Astacin-like metalloendopeptidase of Coturnix japonica (Japanese quail).